The chain runs to 141 residues: Cholinesterase (141 aa).

Asparagine 39 carries N-linked (GlcNAc...) asparagine glycosylation. 49–50 contributes to the substrate binding site; the sequence is GG. The active-site Acyl-ester intermediate is serine 131. Serine 131 bears the Phosphoserine mark.

Belongs to the type-B carboxylesterase/lipase family. In terms of assembly, homotetramer; disulfide-linked. Dimer of dimers. As to expression, present in most cells except erythrocytes.

The protein localises to the secreted. The enzyme catalyses an acylcholine + H2O = a carboxylate + choline + H(+). Its function is as follows. Esterase with broad substrate specificity. Contributes to the inactivation of the neurotransmitter acetylcholine. Can degrade neurotoxic organophosphate esters. The polypeptide is Cholinesterase (BCHE) (Sus scrofa (Pig)).